Reading from the N-terminus, the 224-residue chain is Uridylate kinase (224 aa).

6–10 (KVTGK) contacts ATP. Glycine 41 contacts UMP. ATP contacts are provided by glycine 42 and arginine 46. Residues aspartate 63 and 111 to 117 (FQPGQST) each bind UMP. ATP-binding residues include threonine 137, phenylalanine 143, and aspartate 146.

This sequence belongs to the UMP kinase family. Homohexamer.

The protein localises to the cytoplasm. The enzyme catalyses UMP + ATP = UDP + ADP. It functions in the pathway pyrimidine metabolism; CTP biosynthesis via de novo pathway; UDP from UMP (UMPK route): step 1/1. With respect to regulation, inhibited by UTP. Catalyzes the reversible phosphorylation of UMP to UDP. In Metallosphaera sedula (strain ATCC 51363 / DSM 5348 / JCM 9185 / NBRC 15509 / TH2), this protein is Uridylate kinase.